Here is a 726-residue protein sequence, read N- to C-terminus: Beta-adducin (726 aa).

The tract at residues 1–25 (MSEETVPEAASPPPPQGQPYFDRFS) is disordered. Phosphoserine is present on residues S11 and S25. T55 is modified (phosphothreonine; by PKA). S60 and S344 each carry phosphoserine. Residues 425 to 444 (KQQKEKTRWLNTPNTYLRVN) are interaction with calmodulin. Residues 525–726 (AEKSRSPSTE…KSKKKEKVES (202 aa)) form a disordered region. Phosphoserine is present on residues S530 and S532. T533 bears the Phosphothreonine mark. Residue S535 is modified to Phosphoserine. Over residues 566 to 586 (EEYKKEVERKKLELDGEKETA) the composition is skewed to basic and acidic residues. Over residues 588-606 (EEPGSPAKSAPASPVQSPA) the composition is skewed to low complexity. A phosphoserine mark is found at S592, S596, S600, and S604. T611 is modified (phosphothreonine). Phosphoserine occurs at positions 613, 617, 619, and 621. Residues 621–631 (SLEEGTKKTET) are compositionally biased toward basic and acidic residues. Positions 632–645 (SKAATTEPETTQPE) are enriched in low complexity. A compositionally biased stretch (polar residues) spans 665-674 (GLSQMTTSAD). At T675 the chain carries Phosphothreonine. A phosphoserine mark is found at S686, S689, S693, S697, S699, and S701. Over residues 689-701 (SGPMSPEGSPSKS) the composition is skewed to low complexity. The segment covering 702–726 (PSKKKKKFRTPSFLKKSKKKEKVES) has biased composition (basic residues). S703 is subject to Phosphoserine; by PKC. The interaction with calmodulin stretch occupies residues 704-721 (KKKKKFRTPSFLKKSKKK). Position 713 is a phosphoserine; by PKA and PKC (S713).

It belongs to the aldolase class II family. Adducin subfamily. As to quaternary structure, heterodimer of an alpha and a beta subunit. Found in a complex with ADD2, DMTN and SLC2A1. Interacts with SLC2A1. The N-terminus is blocked. As to expression, expressed mainly in brain, spleen, kidney cortex and medulla, and heart. Also expressed in human umbilical vein endothelial cells, human vascular smooth muscle cells, kidney tubular cells and K-562 cell line.

Its subcellular location is the cytoplasm. The protein resides in the cytoskeleton. It is found in the cell membrane. In terms of biological role, membrane-cytoskeleton-associated protein that promotes the assembly of the spectrin-actin network. Binds to the erythrocyte membrane receptor SLC2A1/GLUT1 and may therefore provide a link between the spectrin cytoskeleton to the plasma membrane. Binds to calmodulin. Calmodulin binds preferentially to the beta subunit. The protein is Beta-adducin (ADD2) of Homo sapiens (Human).